The primary structure comprises 266 residues: tRNA pseudouridine synthase A (266 aa).

Aspartate 51 acts as the Nucleophile in catalysis. Tyrosine 106 provides a ligand contact to substrate.

It belongs to the tRNA pseudouridine synthase TruA family.

It carries out the reaction uridine(38/39/40) in tRNA = pseudouridine(38/39/40) in tRNA. Functionally, formation of pseudouridine at positions 38, 39 and 40 in the anticodon stem and loop of transfer RNAs. The protein is tRNA pseudouridine synthase A of Pyrococcus furiosus (strain ATCC 43587 / DSM 3638 / JCM 8422 / Vc1).